A 708-amino-acid chain; its full sequence is MLKLFSAFRKNKIWDFNGGIHPPEMKTQSNGTPLRQVPLAQRFVIPLKQHIGAEGELCVSVGDKVLRGQPLTRGRGKMLPVHAPTSGTVTAIAPHSTAHPSALAELSVIIDADGEDCWIPRDGWADYRSRSREELIERIHQFGVAGLGGAGFPTGVKLQGGGDKIETLIINAAECEPYITADDRLMQDCAAQVVEGIRILAHILQPREILIGIEDNKPQAISMLRAVLADSHDISLRVIPTKYPSGGAKQLTYILTGKQVPHGGRSSDIGVLMQNVGTAYAVKRAVIDGEPITERVVTLTGEAIARPGNVWARLGTPVRHLLNDAGFCPSADQMVIMGGPLMGFTLPWLDVPVVKITNCLLAPSANELGEPQEEQSCIRCSACADACPADLLPQQLYWFSKGQQHDKATTHNIADCIECGACAWVCPSNIPLVQYFRQEKAEIAAIRQEEKRAAEAKARFEARQARLEREKAARLERHKSAAVQPAAKDKDAIAAALARVKEKQAQATQPIVIKAGERPDNSAIIAAREARKAQARAKQAELQQTNDAATVADPRKTAVEAAIARAKARKLEQQQANAEPEEQIDPRKAAVEAAIARAKARKLEQQQANAEPEEQIDPRKAAVEAAIARAKARKLEQQQANAEPEEQIDPRKAAVEAAIARAKARKLEQQQANAEPEEQIDPRKAAVAAAIARVQAKKAAQQKVVNED.

4Fe-4S ferredoxin-type domains follow at residues 369-397 (GEPQEEQSCIRCSACADACPADLLPQQLY) and 407-436 (KATTHNIADCIECGACAWVCPSNIPLVQYF). Cysteine 377, cysteine 380, cysteine 383, cysteine 387, cysteine 416, cysteine 419, cysteine 422, and cysteine 426 together coordinate [4Fe-4S] cluster. Residues 630 to 682 (AKARKLEQQQANAEPEEQIDPRKAAVEAAIARAKARKLEQQQANAEPEEQIDP) form a disordered region.

This sequence belongs to the 4Fe4S bacterial-type ferredoxin family. RnfC subfamily. The complex is composed of six subunits: RsxA, RsxB, RsxC, RsxD, RsxE and RsxG. [4Fe-4S] cluster is required as a cofactor.

The protein resides in the cell inner membrane. In terms of biological role, part of a membrane-bound complex that couples electron transfer with translocation of ions across the membrane. Required to maintain the reduced state of SoxR. The chain is Ion-translocating oxidoreductase complex subunit C from Escherichia coli (strain UTI89 / UPEC).